We begin with the raw amino-acid sequence, 263 residues long: Virulence plasmid protein pGP6-D-related protein (263 aa).

The protein belongs to the UPF0137 (pGP6-D) family.

In Chlamydia trachomatis serovar D (strain ATCC VR-885 / DSM 19411 / UW-3/Cx), this protein is Virulence plasmid protein pGP6-D-related protein.